An 87-amino-acid polypeptide reads, in one-letter code: Phosphoribosyl-ATP pyrophosphatase (87 aa).

The protein belongs to the PRA-PH family.

The protein localises to the cytoplasm. The catalysed reaction is 1-(5-phospho-beta-D-ribosyl)-ATP + H2O = 1-(5-phospho-beta-D-ribosyl)-5'-AMP + diphosphate + H(+). It participates in amino-acid biosynthesis; L-histidine biosynthesis; L-histidine from 5-phospho-alpha-D-ribose 1-diphosphate: step 2/9. The sequence is that of Phosphoribosyl-ATP pyrophosphatase from Corynebacterium diphtheriae (strain ATCC 700971 / NCTC 13129 / Biotype gravis).